Reading from the N-terminus, the 233-residue chain is Thrombin-like enzyme elegaxobin-1 (233 aa).

The Peptidase S1 domain maps to V1 to A224. 6 disulfides stabilise this stretch: C7–C138, C25–C41, C73–C231, C117–C185, C149–C164, and C175–C200. Catalysis depends on charge relay system residues H40 and D85. The active-site Charge relay system is the S179.

This sequence belongs to the peptidase S1 family. Snake venom subfamily. In terms of assembly, monomer. Expressed by the venom gland.

The protein resides in the secreted. Functionally, thrombin-like snake venom serine protease that clots rabbit fibrinogen. Only the beta chain of fibrinogen (FGB) is cleaved, releasing fibrinopeptide B. Incubation with human fibrinogen alpha and beta resulted in cleavage of both fibrinogen chains but generated neither fibrinopeptide A nor fibrinopeptide B. Promotes clotting of rabbit fibrinogen, but not bovine or human fibrinogen. This is Thrombin-like enzyme elegaxobin-1 from Protobothrops elegans (Elegant pitviper).